Reading from the N-terminus, the 401-residue chain is Nicotinate phosphoribosyltransferase (401 aa).

His221 carries the phosphohistidine; by autocatalysis modification.

The protein belongs to the NAPRTase family. Transiently phosphorylated on a His residue during the reaction cycle. Phosphorylation strongly increases the affinity for substrates and increases the rate of nicotinate D-ribonucleotide production. Dephosphorylation regenerates the low-affinity form of the enzyme, leading to product release.

It catalyses the reaction nicotinate + 5-phospho-alpha-D-ribose 1-diphosphate + ATP + H2O = nicotinate beta-D-ribonucleotide + ADP + phosphate + diphosphate. The protein operates within cofactor biosynthesis; NAD(+) biosynthesis; nicotinate D-ribonucleotide from nicotinate: step 1/1. Its function is as follows. Catalyzes the synthesis of beta-nicotinate D-ribonucleotide from nicotinate and 5-phospho-D-ribose 1-phosphate at the expense of ATP. The chain is Nicotinate phosphoribosyltransferase from Pectobacterium atrosepticum (strain SCRI 1043 / ATCC BAA-672) (Erwinia carotovora subsp. atroseptica).